Here is a 1386-residue protein sequence, read N- to C-terminus: Pleckstrin homology domain-containing family G member 2 (1386 aa).

Disordered stretches follow at residues 1–21 (MPEG…GCGR) and 36–82 (TAPA…PLPG). Low complexity-rich tracts occupy residues 8–17 (LSLSKPSPSL) and 45–62 (SPRG…GSEG). S90 bears the Phosphoserine mark. In terms of domain architecture, DH spans 102 to 283 (RLERVAREIV…TAVAWYINDM (182 aa)). Positions 313-411 (ELVLEGAFRG…WIHCLQRLFF (99 aa)) constitute a PH domain. 5 disordered regions span residues 436 to 540 (KSKP…PSGT), 554 to 612 (GLRD…PSPL), 701 to 739 (EPAE…EEGV), 790 to 815 (ILED…RTAS), and 829 to 859 (QQMQ…SPCL). Phosphothreonine is present on T445. 2 positions are modified to phosphoserine: S450 and S469. Residues 592–603 (SEEEEEEEEGLE) are compositionally biased toward acidic residues. Phosphoserine occurs at positions 911 and 1049. 2 disordered regions span residues 1037-1099 (PVPK…PLPC) and 1162-1191 (TSPK…DTQV). Polar residues-rich tracts occupy residues 1048–1059 (ESPTNIPLTKQG) and 1073–1086 (QPIQ…SSLD). The residue at position 1257 (T1257) is a Phosphothreonine. A phosphoserine mark is found at S1261 and S1310. Disordered regions lie at residues 1291-1333 (ARRQ…ARRL) and 1367-1386 (TQES…PFHM). The segment covering 1301–1317 (PAASRGSWSSAPTSRAS) has biased composition (low complexity). Residues 1318–1330 (SPPPQPQPPPPPA) are compositionally biased toward pro residues.

Functionally, may be a transforming oncogene with exchange activity for CDC42. May be a guanine-nucleotide exchange factor (GEF) for RAC1 and CDC42. Activated by the binding to subunits beta and gamma of the heterotrimeric guanine nucleotide-binding protein (G protein). Involved in the regulation of actin polymerization. This Homo sapiens (Human) protein is Pleckstrin homology domain-containing family G member 2 (PLEKHG2).